Consider the following 392-residue polypeptide: Tyrosine--tRNA ligase (392 aa).

The 'HIGH' region signature appears at 41–50; the sequence is PTAPDLHLGH. The 'KMSKS' region motif lies at 225–229; the sequence is KMSKS. Residue Lys228 coordinates ATP. Residues 330–390 enclose the S4 RNA-binding domain; the sequence is LRAVDFLVKI…VGKKKFYRVV (61 aa).

The protein belongs to the class-I aminoacyl-tRNA synthetase family. TyrS type 2 subfamily. As to quaternary structure, homodimer.

It localises to the cytoplasm. The enzyme catalyses tRNA(Tyr) + L-tyrosine + ATP = L-tyrosyl-tRNA(Tyr) + AMP + diphosphate + H(+). Its function is as follows. Catalyzes the attachment of tyrosine to tRNA(Tyr) in a two-step reaction: tyrosine is first activated by ATP to form Tyr-AMP and then transferred to the acceptor end of tRNA(Tyr). This chain is Tyrosine--tRNA ligase, found in Aquifex aeolicus (strain VF5).